Consider the following 179-residue polypeptide: Inosine/xanthosine triphosphatase (179 aa).

Glutamate 71 is a Mg(2+) binding site. 71–72 (EA) is a substrate binding site.

It belongs to the YjjX NTPase family. In terms of assembly, homodimer. It depends on Mg(2+) as a cofactor. Mn(2+) serves as cofactor.

It catalyses the reaction XTP + H2O = XDP + phosphate + H(+). The enzyme catalyses ITP + H2O = IDP + phosphate + H(+). Functionally, phosphatase that hydrolyzes non-canonical purine nucleotides such as XTP and ITP to their respective diphosphate derivatives. Probably excludes non-canonical purines from DNA/RNA precursor pool, thus preventing their incorporation into DNA/RNA and avoiding chromosomal lesions. The protein is Inosine/xanthosine triphosphatase of Shewanella oneidensis (strain ATCC 700550 / JCM 31522 / CIP 106686 / LMG 19005 / NCIMB 14063 / MR-1).